The chain runs to 312 residues: tRNA dimethylallyltransferase (312 aa).

ATP is bound at residue 17 to 24; sequence GPTASGKT. Substrate is bound at residue 19–24; the sequence is TASGKT. Interaction with substrate tRNA regions lie at residues 42 to 45, 166 to 170, and 247 to 252; these read DSAL, QRLLR, and RCVGYR.

This sequence belongs to the IPP transferase family. Monomer. It depends on Mg(2+) as a cofactor.

The catalysed reaction is adenosine(37) in tRNA + dimethylallyl diphosphate = N(6)-dimethylallyladenosine(37) in tRNA + diphosphate. Functionally, catalyzes the transfer of a dimethylallyl group onto the adenine at position 37 in tRNAs that read codons beginning with uridine, leading to the formation of N6-(dimethylallyl)adenosine (i(6)A). The protein is tRNA dimethylallyltransferase of Sodalis glossinidius (strain morsitans).